Reading from the N-terminus, the 495-residue chain is Catalase B (495 aa).

The interval 1–25 (MSNNKKLTSLFGAPVSDRENSMTAG) is disordered. Active-site residues include His-55 and Asn-128. Residue Tyr-338 coordinates heme.

Belongs to the catalase family. Homodimer. Requires heme as cofactor.

It catalyses the reaction 2 H2O2 = O2 + 2 H2O. Functionally, decomposes hydrogen peroxide into water and oxygen; serves to protect cells from the toxic effects of hydrogen peroxide. This Staphylococcus xylosus protein is Catalase B (katB).